The sequence spans 2541 residues: Talin-1 (2541 aa).

Residues 86 to 403 (RPLKIRMLDG…GYIDIILKKK (318 aa)) form the FERM domain. Threonine 167 bears the Phosphothreonine mark. Residues 280–435 (FQAHKNCGQM…PKKSTVLQQQ (156 aa)) form an interaction with LAYN region. 5 positions are modified to phosphoserine: serine 405, serine 425, serine 446, serine 620, and serine 729. The segment at 482–655 (RGHMPPLTSA…QASGELLQQI (174 aa)) is helical bundle R1. The interval 656-786 (GESDTDPHFQ…ALNELLQHVK (131 aa)) is helical bundle R2. The helical bundle R3 stretch occupies residues 787-911 (AHATGAGPAG…NAAAQNAIKK (125 aa)). Positions 913 to 1044 (LVQRLEHAAK…RTAAQKAQEA (132 aa)) are helical bundle R4. The residue at position 1021 (serine 1021) is a Phosphoserine. Residues 1046–1206 (GPLEMDSALS…NRCVSCLPGQ (161 aa)) are helical bundle R5. Phosphotyrosine is present on tyrosine 1116. Threonine 1142 carries the phosphothreonine modification. Phosphoserine occurs at positions 1201 and 1225. Positions 1207 to 1357 (RDVDNALRAV…QLITMCTQQA (151 aa)) are helical bundle R6. The residue at position 1263 (threonine 1263) is a Phosphothreonine. Serine 1323 bears the Phosphoserine mark. The segment at 1327 to 1948 (AAPNLKSQLA…CSPSDAYTKK (622 aa)) is interaction with SYNM. Residues 1358–1453 (PGQKECDNAL…AYLVGVSDPN (96 aa)) form a helical bundle R7A region. The interval 1359–1659 (GQKECDNALR…SMRDKAPGQL (301 aa)) is interaction with VCL and F-actin. A helical bundle R8 region spans residues 1461 to 1580 (LVEPTQFARA…NLSAFASNPE (120 aa)). Lysine 1544 carries the N6-acetyllysine modification. A helical bundle R7B region spans residues 1581–1653 (FSSIPAQISP…IKKLITSMRD (73 aa)). Residues 1655-1822 (APGQLECETA…TLNEAASAAG (168 aa)) form a helical bundle R9 region. The segment at 1823 to 1973 (VVGGMVDSIT…VLAALQAGNR (151 aa)) is helical bundle R10. At serine 1849 the chain carries Phosphoserine. A Phosphothreonine modification is found at threonine 1855. Serine 1878 carries the post-translational modification Phosphoserine. Residues 1974–2140 (GTQACITAAS…TVKAVEDEAT (167 aa)) form a helical bundle R11 region. At lysine 2031 the chain carries N6-acetyllysine. The residue at position 2040 (serine 2040) is a Phosphoserine. Position 2115 is an N6-acetyllysine (lysine 2115). The helical bundle R12 stretch occupies residues 2141-2294 (KGTRALEATT…QAAEAMKGTE (154 aa)). One can recognise an I/LWEQ domain in the interval 2293–2533 (TEWVDPEDPT…QIRQQQYKFL (241 aa)). A helical bundle R13 region spans residues 2300-2482 (DPTVIAENEL…AAQKAAAFEE (183 aa)).

As to quaternary structure, part of a complex composed of THSD1, PTK2/FAK1, TLN1 and VCL. Interacts with THSD1; this promotes interaction with PTK2/FAK1 and VCL. Binds with high affinity to VCL and with low affinity to integrins. Interacts with APBB1IP; this inhibits VCL binding. Interacts with PTK2/FAK1. Interacts with PIP5K1C and NRAP. Interacts with LAYN. Interacts with SYNM. Interacts with ITGB1; the interaction is prevented by competitive binding of ITGB1BP1. Interacts with SVEP1. Interacts (via R7 domain) with KANK1 or KANK2 (via KN motif); this interaction likely initiates the assembly of cortical microtubule stabilization complexes (CMSCs) at the vicinity of focal adhesions. Interacts with VCL; shows reduced VCL binding compared to isoform 2. Interacts with APBB1IP; shows similar level of binding compared to isoform 2. In terms of assembly, interacts with VCL; shows enhanced VCL binding compared to isoform 1. Interacts with APBB1IP; shows similar level of binding compared to isoform 1. As to quaternary structure, (Microbial infection) Interacts with human cytomegalovirus protein UL135. Expressed at low to non-detectable levels in many tissues but highly expressed in skin and pancreas with other tissues including kidney cortex, endocervix, testis, pituitary, liver, and spleen also showing robust expression.

The protein localises to the cell projection. It localises to the ruffle membrane. The protein resides in the cytoplasm. It is found in the cytoskeleton. Its subcellular location is the cell surface. The protein localises to the cell junction. It localises to the focal adhesion. High molecular weight cytoskeletal protein concentrated at regions of cell-matrix and cell-cell contacts. Involved in connections of major cytoskeletal structures to the plasma membrane. With KANK1 co-organize the assembly of cortical microtubule stabilizing complexes (CMSCs) positioned to control microtubule-actin crosstalk at focal adhesions (FAs) rims. This is Talin-1 (TLN1) from Homo sapiens (Human).